We begin with the raw amino-acid sequence, 231 residues long: uncharacterized protein (231 aa).

An NADP(+)-binding site is contributed by 10–34 (VVTGAGSGIGEAIATLLHEEGAKVV). Position 140 (serine 140) interacts with substrate. Tyrosine 153 functions as the Proton acceptor in the catalytic mechanism.

It belongs to the short-chain dehydrogenases/reductases (SDR) family.

This is an uncharacterized protein from Staphylococcus aureus (strain MRSA252).